The following is a 529-amino-acid chain: Bifunctional purine biosynthesis protein PurH (529 aa).

The MGS-like domain maps to 1–148; it reads MQQPRPIRRA…KNHKDVAIVV (148 aa).

This sequence belongs to the PurH family.

The enzyme catalyses (6R)-10-formyltetrahydrofolate + 5-amino-1-(5-phospho-beta-D-ribosyl)imidazole-4-carboxamide = 5-formamido-1-(5-phospho-D-ribosyl)imidazole-4-carboxamide + (6S)-5,6,7,8-tetrahydrofolate. It catalyses the reaction IMP + H2O = 5-formamido-1-(5-phospho-D-ribosyl)imidazole-4-carboxamide. It functions in the pathway purine metabolism; IMP biosynthesis via de novo pathway; 5-formamido-1-(5-phospho-D-ribosyl)imidazole-4-carboxamide from 5-amino-1-(5-phospho-D-ribosyl)imidazole-4-carboxamide (10-formyl THF route): step 1/1. Its pathway is purine metabolism; IMP biosynthesis via de novo pathway; IMP from 5-formamido-1-(5-phospho-D-ribosyl)imidazole-4-carboxamide: step 1/1. In Serratia proteamaculans (strain 568), this protein is Bifunctional purine biosynthesis protein PurH.